The following is a 259-amino-acid chain: Deoxyribose-phosphate aldolase (259 aa).

D102 serves as the catalytic Proton donor/acceptor. Catalysis depends on K167, which acts as the Schiff-base intermediate with acetaldehyde. The Proton donor/acceptor role is filled by K201.

It belongs to the DeoC/FbaB aldolase family. DeoC type 2 subfamily.

It localises to the cytoplasm. The enzyme catalyses 2-deoxy-D-ribose 5-phosphate = D-glyceraldehyde 3-phosphate + acetaldehyde. The protein operates within carbohydrate degradation; 2-deoxy-D-ribose 1-phosphate degradation; D-glyceraldehyde 3-phosphate and acetaldehyde from 2-deoxy-alpha-D-ribose 1-phosphate: step 2/2. Functionally, catalyzes a reversible aldol reaction between acetaldehyde and D-glyceraldehyde 3-phosphate to generate 2-deoxy-D-ribose 5-phosphate. The polypeptide is Deoxyribose-phosphate aldolase (Enterobacter sp. (strain 638)).